Reading from the N-terminus, the 369-residue chain is Superinfection exclusion protein (369 aa).

The signal sequence occupies residues 1 to 15 (MIALLILSLTCSVST).

This sequence belongs to the serpin family. Orthopoxvirus OPG040 subfamily. As to quaternary structure, interacts with OPG185/A56 protein.

It is found in the virion membrane. It localises to the host cell membrane. Negatively regulates superinfection and syncytium formation in infected host cells. Acts in concert with OPG185/A56 protein at the host cell membrane by interacting with and inhibiting the mature virion entry/fusion complex (EFC). This mechanism ensures that new virions released from the cell cannot enter already infected cells. The protein is Superinfection exclusion protein (OPG040) of Vaccinia virus (strain Western Reserve) (VACV).